Reading from the N-terminus, the 209-residue chain is Small ribosomal subunit protein uS4 (209 aa).

The S4 RNA-binding domain maps to 98 to 159 (RRLDSAVYRL…KSRKITRIND (62 aa)).

It belongs to the universal ribosomal protein uS4 family. As to quaternary structure, part of the 30S ribosomal subunit. Contacts protein S5. The interaction surface between S4 and S5 is involved in control of translational fidelity.

Its function is as follows. One of the primary rRNA binding proteins, it binds directly to 16S rRNA where it nucleates assembly of the body of the 30S subunit. In terms of biological role, with S5 and S12 plays an important role in translational accuracy. The sequence is that of Small ribosomal subunit protein uS4 from Syntrophotalea carbinolica (strain DSM 2380 / NBRC 103641 / GraBd1) (Pelobacter carbinolicus).